Reading from the N-terminus, the 152-residue chain is Venom protein family 1 protein 2 (152 aa).

A signal peptide spans 1 to 21 (MAKLVFISFLVASFCLIGCFG). Cysteines 70 and 150 form a disulfide.

The protein belongs to the insect vpf1 family. As to expression, expressed by the venom gland (posterior main gland) (at protein level).

The protein resides in the secreted. This is Venom protein family 1 protein 2 from Platymeris rhadamanthus (Red spot assassin bug).